The following is a 166-amino-acid chain: Protein phosphatase 1 regulatory subunit 1A (166 aa).

Met-1 carries the N-acetylmethionine modification. Positions 1 to 166 (MEQDNSPRKI…SQDSQGASAV (166 aa)) are disordered. The interval 9 to 12 (KIQF) is essential for activity. The segment covering 19 to 29 (PHLDPEAAEQI) has biased composition (basic and acidic residues). Residue Thr-35 is modified to Phosphothreonine; by PKA. The essential for activity stretch occupies residues 42-54 (TSDQSSPEVDEDR). Ser-43, Ser-46, Ser-47, and Ser-67 each carry phosphoserine. The span at 104-114 (AAEGTGAQESQ) shows a compositional bias: low complexity. Basic and acidic residues predominate over residues 143-152 (AQERRGEEPS). Residues 143–166 (AQERRGEEPSTAKTSQDSQGASAV) form an interaction with PPP1R15A region. The span at 153–166 (TAKTSQDSQGASAV) shows a compositional bias: polar residues.

It belongs to the protein phosphatase inhibitor 1 family. In terms of assembly, interacts with PPP1R15A. Phosphorylation of Thr-35 is required for activity.

In terms of biological role, inhibitor of protein-phosphatase 1. This protein may be important in hormonal control of glycogen metabolism. Hormones that elevate intracellular cAMP increase I-1 activity in many tissues. I-1 activation may impose cAMP control over proteins that are not directly phosphorylated by PKA. Following a rise in intracellular calcium, I-1 is inactivated by calcineurin (or PP2B). Does not inhibit type-2 phosphatases. The protein is Protein phosphatase 1 regulatory subunit 1A (PPP1R1A) of Oryctolagus cuniculus (Rabbit).